The chain runs to 271 residues: Dioscorin dioA3 (271 aa).

An N-terminal signal peptide occupies residues methionine 1 to serine 21. The region spanning aspartate 28 to glutamate 262 is the Alpha-carbonic anhydrase domain. A disulfide bridge connects residues cysteine 53 and cysteine 212. Residue histidine 94 is the Proton acceptor of the active site. L-ascorbate contacts are provided by residues aspartate 95, histidine 120–histidine 122, glutamine 139, and threonine 208–alanine 209.

The protein belongs to the alpha-carbonic anhydrase family. As to quaternary structure, monomer. Homodimer. In terms of processing, not glycosylated. As to expression, expressed in tuber (at protein level).

The catalysed reaction is hydrogencarbonate + H(+) = CO2 + H2O. It catalyses the reaction 2 monodehydro-L-ascorbate radical + NADH + H(+) = 2 L-ascorbate + NAD(+). Its activity is regulated as follows. The carbonate dehydratase activity is not substantially changed by the addition of Zn(2+). Its function is as follows. Storage protein of tuber. Involved in protection against oxidative stress. Has carbonate dehydratase, trypsin inhibitor, dehydroascorbate (DHA) reductase and monodehydroascorbate (MDA) reductase activities. Catalyzes the reactions of carbonate dehydratase and DHA reductase independently of zinc and glutathione (GSH). The coupled reaction is capable of recycling a plant antioxidant ascorbate using ubiquitous compounds H(2)O and CO(2). Exhibits antioxidant activity. Able to scavenge 1,1-diphenyl-2-picrylhydrazyl (DPPH) radical. Exhibits immunomodulatory activity. Activates Toll-like receptor 4 signaling pathways by up-regulating the gene expression of pro-inflammatory cytokines, such as tumor necrosis factor alpha, interleukin-1 beta and interleukin-6, and chemokines RANTES and MCP-1, in mouse RAW 264.7 macrophages. Stimulates the phagocytosis of E.coli by the LPS-treated mouse macrophages. This Dioscorea japonica (Japanese yam) protein is Dioscorin dioA3.